The chain runs to 241 residues: Sugar fermentation stimulation protein homolog (241 aa).

It belongs to the SfsA family.

This is Sugar fermentation stimulation protein homolog from Halorhodospira halophila (strain DSM 244 / SL1) (Ectothiorhodospira halophila (strain DSM 244 / SL1)).